Consider the following 257-residue polypeptide: S-methyl-5'-thioadenosine phosphorylase (257 aa).

Residues S10 and R50–H51 each bind phosphate. C130 and C195 are oxidised to a cystine. Residue M180 participates in substrate binding. T181 serves as a coordination point for phosphate. D204–D206 lines the substrate pocket. C246 and C248 form a disulfide bridge.

This sequence belongs to the PNP/MTAP phosphorylase family. MTAP subfamily. As to quaternary structure, homohexamer. Dimer of a homotrimer.

It carries out the reaction S-methyl-5'-thioadenosine + phosphate = 5-(methylsulfanyl)-alpha-D-ribose 1-phosphate + adenine. It participates in amino-acid biosynthesis; L-methionine biosynthesis via salvage pathway; S-methyl-5-thio-alpha-D-ribose 1-phosphate from S-methyl-5'-thioadenosine (phosphorylase route): step 1/1. Its function is as follows. Catalyzes the reversible phosphorylation of S-methyl-5'-thioadenosine (MTA) to adenine and 5-methylthioribose-1-phosphate. Involved in the breakdown of MTA, a major by-product of polyamine biosynthesis. Responsible for the first step in the methionine salvage pathway after MTA has been generated from S-adenosylmethionine. Has broad substrate specificity with 6-aminopurine nucleosides as preferred substrates. This Pyrococcus furiosus (strain ATCC 43587 / DSM 3638 / JCM 8422 / Vc1) protein is S-methyl-5'-thioadenosine phosphorylase.